Consider the following 305-residue polypeptide: tRNA pseudouridine synthase B (305 aa).

Asp-48 serves as the catalytic Nucleophile.

The protein belongs to the pseudouridine synthase TruB family. Type 1 subfamily.

It carries out the reaction uridine(55) in tRNA = pseudouridine(55) in tRNA. In terms of biological role, responsible for synthesis of pseudouridine from uracil-55 in the psi GC loop of transfer RNAs. This chain is tRNA pseudouridine synthase B, found in Actinobacillus pleuropneumoniae serotype 5b (strain L20).